The primary structure comprises 83 residues: Large ribosomal subunit protein bL27 (83 aa).

Belongs to the bacterial ribosomal protein bL27 family.

The polypeptide is Large ribosomal subunit protein bL27 (Treponema denticola (strain ATCC 35405 / DSM 14222 / CIP 103919 / JCM 8153 / KCTC 15104)).